A 115-amino-acid chain; its full sequence is MNMLTALLVNITLSMLLIIVAFWFFQLNLYTEKANPYECGFDPMGSARLPFSMKFFLVAITFLLFDLEIALLLPLPWAIQMYNTNIMMLTAFILISVLALGLAYEWLQKGLEWTE.

Helical transmembrane passes span 5–25 (TALL…FWFF), 55–75 (FFLV…LLPL), and 86–106 (IMML…AYEW).

The protein belongs to the complex I subunit 3 family. As to quaternary structure, core subunit of respiratory chain NADH dehydrogenase (Complex I) which is composed of 45 different subunits. Interacts with TMEM186. Interacts with TMEM242.

It localises to the mitochondrion inner membrane. The enzyme catalyses a ubiquinone + NADH + 5 H(+)(in) = a ubiquinol + NAD(+) + 4 H(+)(out). Core subunit of the mitochondrial membrane respiratory chain NADH dehydrogenase (Complex I) which catalyzes electron transfer from NADH through the respiratory chain, using ubiquinone as an electron acceptor. Essential for the catalytic activity of complex I. The protein is NADH-ubiquinone oxidoreductase chain 3 of Peromyscus sejugis (Santa Cruz mouse).